We begin with the raw amino-acid sequence, 425 residues long: Serine--tRNA ligase (425 aa).

Position 232 to 234 (232 to 234) interacts with L-serine; the sequence is TSE. ATP contacts are provided by residues 263–265 and Val279; that span reads RRE. L-serine is bound at residue Glu286. 350–353 provides a ligand contact to ATP; that stretch reads EAVS. Thr387 contributes to the L-serine binding site.

This sequence belongs to the class-II aminoacyl-tRNA synthetase family. Type-1 seryl-tRNA synthetase subfamily. As to quaternary structure, homodimer. The tRNA molecule binds across the dimer.

Its subcellular location is the cytoplasm. It carries out the reaction tRNA(Ser) + L-serine + ATP = L-seryl-tRNA(Ser) + AMP + diphosphate + H(+). The catalysed reaction is tRNA(Sec) + L-serine + ATP = L-seryl-tRNA(Sec) + AMP + diphosphate + H(+). The protein operates within aminoacyl-tRNA biosynthesis; selenocysteinyl-tRNA(Sec) biosynthesis; L-seryl-tRNA(Sec) from L-serine and tRNA(Sec): step 1/1. Its function is as follows. Catalyzes the attachment of serine to tRNA(Ser). Is also able to aminoacylate tRNA(Sec) with serine, to form the misacylated tRNA L-seryl-tRNA(Sec), which will be further converted into selenocysteinyl-tRNA(Sec). In Methanoculleus marisnigri (strain ATCC 35101 / DSM 1498 / JR1), this protein is Serine--tRNA ligase.